The chain runs to 422 residues: MIKVYRYEIVKPLDLDWKEFGTILRQLQQETRFALNKATQLAWEWMGFSSDYKDNHGEYPKSKDILGYTNVHGYAYHTIKTKAYRLNSGNLSQTIKRATDRFKAYQKEILRGDMSIPSYKRDIPLDLIKENISVNRMNHGDYIASLSLLSNPAKQEMNVKRKISVIIIVRGAGKTIMDRILSGEYQVSASQIIHDDRKNKWYLNISYDFEPQTRVLDLNKIMGIDLGVAVAVYMAFQHTPARYKLEGGEIENFRRQVESRRISMLRQGKYAGGARGGHGRDKRIKPIEQLRDKIANFRDTTNHRYSRYIVDMAIKEGCGTIQMEDLTNIRDIGSRFLQNWTYYDLQQKIIYKAEEAGIKVIKIDPQYTSQRCSECGNIDSGNRIGQAIFKCRACGYEANADYNAARNIAIPNIDKIIAESIK.

The recognition domain (REC) stretch occupies residues 1–126; sequence MIKVYRYEIV…PSYKRDIPLD (126 aa). Residues 127–211 are wedge domain (WED); the sequence is LIKENISVNR…YLNISYDFEP (85 aa). A linker region spans residues 212-220; the sequence is QTRVLDLNK. The interval 221-370 is ruvC-I; it reads IMGIDLGVAV…IKIDPQYTSQ (150 aa). Residues Asp225 and Glu324 contribute to the active site. Residues 371–399 form a target nucleic acid-binding (TNB) region; the sequence is RCSECGNIDSGNRIGQAIFKCRACGYEAN. Positions 372, 375, 391, and 394 each coordinate Zn(2+). Residues 400–420 form a ruvC-II region; that stretch reads ADYNAARNIAIPNIDKIIAES. Residue Asp401 is part of the active site.

It belongs to the CRISPR-associated endonuclease Cas12f family. An asymmetric homodimer. Guide RNA is probably required for dimerization. Mg(2+) is required as a cofactor. It depends on Zn(2+) as a cofactor.

In terms of biological role, CRISPR (clustered regularly interspaced short palindromic repeat), is an adaptive immune system that provides protection against mobile genetic elements (viruses, transposable elements and conjugative plasmids). CRISPR clusters contain sequences complementary to antecedent mobile elements and target invading nucleic acids. CRISPR clusters are transcribed and processed into CRISPR RNA (crRNA), which requires a trans-encoded small RNA (tracrRNA), but not this protein. Recognizes a short motif in the CRISPR repeat sequences (the 5' PAM or protospacer adjacent motif, YTT in this organism) to help distinguish self versus nonself, as targets within the CRISPR locus do not have PAMs. Has dsDNA endonuclease activity upon expression in E.coli of this protein, a mini CRISPR array and the probable tracrRNA. Plasmid cleavage is centered around positions 19-24 base pairs 3' of PAM. The mini system protects E.coli against transformation by foreign plasmids. In Sulfoacidibacillus thermotolerans (Acidibacillus sulfuroxidans), this protein is CRISPR-associated endodeoxyribonuclease Cas12f1.